We begin with the raw amino-acid sequence, 432 residues long: Mitochondrial distribution and morphology protein 12 (432 aa).

The region spanning methionine 1–isoleucine 432 is the SMP-LTD domain. Disordered regions lie at residues tryptophan 182–arginine 273 and glutamine 354–glutamine 377. Positions threonine 214–serine 234 are enriched in low complexity. Basic and acidic residues-rich tracts occupy residues threonine 243–aspartate 253 and glutamine 355–proline 364.

Belongs to the MDM12 family. As to quaternary structure, component of the ER-mitochondria encounter structure (ERMES) or MDM complex, composed of mmm1, mdm10, mdm12 and mdm34. A mmm1 homodimer associates with one molecule of mdm12 on each side in a pairwise head-to-tail manner, and the SMP-LTD domains of mmm1 and mdm12 generate a continuous hydrophobic tunnel for phospholipid trafficking.

It is found in the mitochondrion outer membrane. The protein resides in the endoplasmic reticulum membrane. Functionally, component of the ERMES/MDM complex, which serves as a molecular tether to connect the endoplasmic reticulum (ER) and mitochondria. Components of this complex are involved in the control of mitochondrial shape and protein biogenesis, and function in nonvesicular lipid trafficking between the ER and mitochondria. Mdm12 is required for the interaction of the ER-resident membrane protein MMM1 and the outer mitochondrial membrane-resident beta-barrel protein mdm10. The mdm12-mmm1 subcomplex functions in the major beta-barrel assembly pathway that is responsible for biogenesis of all mitochondrial outer membrane beta-barrel proteins, and acts in a late step after the SAM complex. The mdm10-mdm12-mmm1 subcomplex further acts in the TOM40-specific pathway after the action of the mdm12-mmm1 complex. Essential for establishing and maintaining the structure of mitochondria and maintenance of mtDNA nucleoids. The polypeptide is Mitochondrial distribution and morphology protein 12 (Aspergillus flavus (strain ATCC 200026 / FGSC A1120 / IAM 13836 / NRRL 3357 / JCM 12722 / SRRC 167)).